A 473-amino-acid polypeptide reads, in one-letter code: H(+)/Cl(-) exchange transporter ClcA (473 aa).

The Cytoplasmic portion of the chain corresponds to 1-32 (MKTDTPTFEAQQIVRLRRGRLIRRLVQRDKTP). Residues 33–69 (LAILLMAAVVGTLTGLVGVAFEKAVSWVQNMRIGALV) form a helical membrane-spanning segment. At 70–76 (QVADHAF) the chain is on the periplasmic side. A helical transmembrane segment spans residues 77 to 100 (LLWPLAFILSALLAMVGYFLVRKF). The Selectivity filter part_1 signature appears at 106 to 110 (GSGIP). Ser-107 serves as a coordination point for chloride. The helical intramembrane region spans 109-116 (IPEIEGAL). The Cytoplasmic portion of the chain corresponds to 117–123 (EELRPVR). A run of 2 helical transmembrane segments spans residues 124–141 (WWRV…TLGA) and 148–166 (EGPT…LDVF). The Selectivity filter part_2 signature appears at 146 to 150 (GREGP). Residues 167–176 (RMRSAEARHT) are Cytoplasmic-facing. 2 consecutive intramembrane regions (helical) follow at residues 177–189 (LLAT…LSAA) and 193–201 (PLAGILFII). Residues 202–214 (EEMRPQFRYNLIS) lie on the Cytoplasmic side of the membrane. The helical transmembrane segment at 215 to 232 (IKAVFTGVIMSSIVFRIF) threads the bilayer. Residues 233-252 (NGEAPIIEVGKLSNAPVNTL) are Periplasmic-facing. The chain crosses the membrane as a helical span at residues 253-281 (WLYLVLGIIFGCVGPVFNTLVLRTQDMFQ). At 282-287 (RFHGGE) the chain is on the cytoplasmic side. The helical transmembrane segment at 288-309 (IKKWVLMGGAIGGLCGILGLIE) threads the bilayer. The Periplasmic segment spans residues 310 to 329 (PEAAGGGFNLIPIAAAGNFS). 2 helical membrane passes run 330–349 (VGLL…LCFS) and 355–376 (GIFA…MAAA). The Selectivity filter part_3 signature appears at 355–359 (GIFAP). Chloride is bound by residues Ile-356 and Phe-357. The Periplasmic portion of the chain corresponds to 377-386 (VLFPQYHLEA). The segment at residues 387–401 (GTFAIAGMGALMAAS) is an intramembrane region (helical). Residues 402–404 (VRA) constitute an intramembrane region (note=Loop between two helices). The segment at residues 405 to 416 (PLTGIVLVLEMT) is an intramembrane region (helical). The segment at residues 417-421 (DNYQL) is an intramembrane region (note=Loop between two helices). The helical transmembrane segment at 422–438 (ILPMIITCLGATLLAQF) threads the bilayer. The Cytoplasmic portion of the chain corresponds to 439-473 (LGGKPLYSTILARTLAKQDAEQAAKNQSTPAGENT). Tyr-445 is a binding site for chloride.

This sequence belongs to the chloride channel (TC 2.A.49) family. ClcA subfamily. Homodimer.

Its subcellular location is the cell inner membrane. It carries out the reaction 2 chloride(in) + H(+)(out) = 2 chloride(out) + H(+)(in). Proton-coupled chloride transporter. Functions as antiport system and exchanges two chloride ions for 1 proton. Probably acts as an electrical shunt for an outwardly-directed proton pump that is linked to amino acid decarboxylation, as part of the extreme acid resistance (XAR) response. This Salmonella arizonae (strain ATCC BAA-731 / CDC346-86 / RSK2980) protein is H(+)/Cl(-) exchange transporter ClcA.